Here is a 393-residue protein sequence, read N- to C-terminus: Argininosuccinate synthase (393 aa).

ATP is bound by residues A10–S18 and A37. L-citrulline is bound at residue Y88. Residue G118 coordinates ATP. T120, N124, and D125 together coordinate L-aspartate. N124 serves as a coordination point for L-citrulline. 5 residues coordinate L-citrulline: R128, S176, S185, E261, and Y273.

It belongs to the argininosuccinate synthase family. Type 1 subfamily. In terms of assembly, homotetramer.

The protein resides in the cytoplasm. The catalysed reaction is L-citrulline + L-aspartate + ATP = 2-(N(omega)-L-arginino)succinate + AMP + diphosphate + H(+). It participates in amino-acid biosynthesis; L-arginine biosynthesis; L-arginine from L-ornithine and carbamoyl phosphate: step 2/3. The protein is Argininosuccinate synthase of Carsonella ruddii (strain PV).